The sequence spans 348 residues: 4-hydroxy-2-oxovalerate aldolase (348 aa).

Residues Ile9–Gln261 enclose the Pyruvate carboxyltransferase domain. Arg17–Asp18 is a binding site for substrate. Mn(2+) is bound at residue Asp18. The active-site Proton acceptor is His21. The substrate site is built by Ser171 and His200. His200 and His202 together coordinate Mn(2+). Tyr291 lines the substrate pocket.

It belongs to the 4-hydroxy-2-oxovalerate aldolase family.

The catalysed reaction is (S)-4-hydroxy-2-oxopentanoate = acetaldehyde + pyruvate. This chain is 4-hydroxy-2-oxovalerate aldolase, found in Ralstonia pickettii (strain 12J).